Here is a 295-residue protein sequence, read N- to C-terminus: Ethanolamine ammonia-lyase small subunit (295 aa).

Residues Val-207, Glu-228, and Cys-258 each contribute to the adenosylcob(III)alamin site.

It belongs to the EutC family. As to quaternary structure, the basic unit is a heterodimer which dimerizes to form tetramers. The heterotetramers trimerize; 6 large subunits form a core ring with 6 small subunits projecting outwards. Adenosylcob(III)alamin is required as a cofactor.

It is found in the bacterial microcompartment. The enzyme catalyses ethanolamine = acetaldehyde + NH4(+). The protein operates within amine and polyamine degradation; ethanolamine degradation. Its function is as follows. Catalyzes the deamination of various vicinal amino-alcohols to oxo compounds. Allows this organism to utilize ethanolamine as the sole source of nitrogen and carbon in the presence of external vitamin B12. This is Ethanolamine ammonia-lyase small subunit from Escherichia coli O157:H7.